The sequence spans 140 residues: MAKKVVGLIKLQIPAGKANPSPPVGPALGQHGVNIMEFCKAFNAKTQAQDGMIIPVVITVFADRSFSFITKTPPAAVLLMKAAKIPKGSSVPNKDKVGKVTKAQVREIAELKMPDLNAFDIEAAIRTIEGTARSMGLEIV.

Belongs to the universal ribosomal protein uL11 family. As to quaternary structure, part of the ribosomal stalk of the 50S ribosomal subunit. Interacts with L10 and the large rRNA to form the base of the stalk. L10 forms an elongated spine to which L12 dimers bind in a sequential fashion forming a multimeric L10(L12)X complex. In terms of processing, one or more lysine residues are methylated.

Functionally, forms part of the ribosomal stalk which helps the ribosome interact with GTP-bound translation factors. The polypeptide is Large ribosomal subunit protein uL11 (Syntrophotalea carbinolica (strain DSM 2380 / NBRC 103641 / GraBd1) (Pelobacter carbinolicus)).